Here is a 129-residue protein sequence, read N- to C-terminus: MYDNLKSLGITNPDEIDRYSLRQEANNDILKIYFHKDKGEFFAKSVKFKYPRQRKTVVADGVGQGYKEVQEISPNLRYVIDELDQICQRDRTEVDLKRKILDDLRHLESVVTHKISEIEADLEKLTRNK.

Belongs to the UPF0325 family.

The protein is UPF0325 protein Ent638_0703 of Enterobacter sp. (strain 638).